The following is a 261-amino-acid chain: Ribosomal RNA small subunit methyltransferase J (261 aa).

S-adenosyl-L-methionine contacts are provided by residues 129–130 (ER) and D182.

Belongs to the methyltransferase superfamily. RsmJ family.

It localises to the cytoplasm. The enzyme catalyses guanosine(1516) in 16S rRNA + S-adenosyl-L-methionine = N(2)-methylguanosine(1516) in 16S rRNA + S-adenosyl-L-homocysteine + H(+). In terms of biological role, specifically methylates the guanosine in position 1516 of 16S rRNA. This chain is Ribosomal RNA small subunit methyltransferase J, found in Desulfotalea psychrophila (strain LSv54 / DSM 12343).